A 312-amino-acid chain; its full sequence is Porphobilinogen deaminase (312 aa).

C241 carries the S-(dipyrrolylmethanemethyl)cysteine modification.

Belongs to the HMBS family. In terms of assembly, monomer. The cofactor is dipyrromethane.

The catalysed reaction is 4 porphobilinogen + H2O = hydroxymethylbilane + 4 NH4(+). The protein operates within porphyrin-containing compound metabolism; protoporphyrin-IX biosynthesis; coproporphyrinogen-III from 5-aminolevulinate: step 2/4. Its function is as follows. Tetrapolymerization of the monopyrrole PBG into the hydroxymethylbilane pre-uroporphyrinogen in several discrete steps. This is Porphobilinogen deaminase from Trichlorobacter lovleyi (strain ATCC BAA-1151 / DSM 17278 / SZ) (Geobacter lovleyi).